The sequence spans 319 residues: HPr kinase/phosphorylase (319 aa).

Catalysis depends on residues H144 and K165. Residue 159–166 coordinates ATP; the sequence is GKSGIGKS. S166 serves as a coordination point for Mg(2+). D183 acts as the Proton acceptor; for phosphorylation activity. Proton donor; for dephosphorylation activity in catalysis. An important for the catalytic mechanism of both phosphorylation and dephosphorylation region spans residues 207-216; sequence MEIRGLGVIN. E208 provides a ligand contact to Mg(2+). Residue R249 is part of the active site. The important for the catalytic mechanism of dephosphorylation stretch occupies residues 270-275; the sequence is PVRPGR.

It belongs to the HPrK/P family. As to quaternary structure, homohexamer. Requires Mg(2+) as cofactor.

The catalysed reaction is [HPr protein]-L-serine + ATP = [HPr protein]-O-phospho-L-serine + ADP + H(+). The enzyme catalyses [HPr protein]-O-phospho-L-serine + phosphate + H(+) = [HPr protein]-L-serine + diphosphate. Its function is as follows. Catalyzes the ATP- as well as the pyrophosphate-dependent phosphorylation of a specific serine residue in HPr, a phosphocarrier protein of the phosphoenolpyruvate-dependent sugar phosphotransferase system (PTS). HprK/P also catalyzes the pyrophosphate-producing, inorganic phosphate-dependent dephosphorylation (phosphorolysis) of seryl-phosphorylated HPr (P-Ser-HPr). This chain is HPr kinase/phosphorylase, found in Geobacter sulfurreducens (strain ATCC 51573 / DSM 12127 / PCA).